The following is a 187-amino-acid chain: MNDLKNAENGPDEADTPQGAPSQEPDPFVVLENLQAENTSLKDKLLRTLADMENLRRRTEKEVADAKTYGVTSFARDMLTFADNLHRALANVPAEARAKAEPAVQTLIEGLQLTERDFASRLERFGVKKIDPAGQKFDPNLHEALFEQPDESVPNGTVTQVIEPGYVIGERVLRPAKVGVSRGGPKG.

Residues methionine 1–aspartate 26 form a disordered region.

It belongs to the GrpE family. As to quaternary structure, homodimer.

It is found in the cytoplasm. Functionally, participates actively in the response to hyperosmotic and heat shock by preventing the aggregation of stress-denatured proteins, in association with DnaK and GrpE. It is the nucleotide exchange factor for DnaK and may function as a thermosensor. Unfolded proteins bind initially to DnaJ; upon interaction with the DnaJ-bound protein, DnaK hydrolyzes its bound ATP, resulting in the formation of a stable complex. GrpE releases ADP from DnaK; ATP binding to DnaK triggers the release of the substrate protein, thus completing the reaction cycle. Several rounds of ATP-dependent interactions between DnaJ, DnaK and GrpE are required for fully efficient folding. This chain is Protein GrpE, found in Methylocella silvestris (strain DSM 15510 / CIP 108128 / LMG 27833 / NCIMB 13906 / BL2).